The chain runs to 240 residues: Probable transcriptional regulatory protein OEOE_0768 (240 aa).

Positions 1-21 (MSGHSKWHNIQGRKNAQDAKR) are disordered.

It belongs to the TACO1 family.

It is found in the cytoplasm. This is Probable transcriptional regulatory protein OEOE_0768 from Oenococcus oeni (strain ATCC BAA-331 / PSU-1).